A 269-amino-acid chain; its full sequence is Spermatogenesis-associated serine-rich protein 1 (269 aa).

Over residues 1 to 14 (MESSKDTQHGDALE) the composition is skewed to basic and acidic residues. Residues 1-92 (MESSKDTQHG…SKVSLPEIPK (92 aa)) form a disordered region. Residues 18-38 (CLANRTSSRQNKRTSLSSSDG) are compositionally biased toward polar residues. Thr-54 carries the post-translational modification Phosphothreonine. Residues 67 to 86 (SSSSSSSSSSAQSNRSSKVS) show a composition bias toward low complexity. Phosphoserine is present on residues Ser-72, Ser-75, and Ser-82.

The chain is Spermatogenesis-associated serine-rich protein 1 (Spats1) from Mus musculus (Mouse).